A 360-amino-acid chain; its full sequence is Phospho-N-acetylmuramoyl-pentapeptide-transferase (360 aa).

A run of 10 helical transmembrane segments spans residues 27–47 (IVSL…LIAW), 72–92 (PTMG…MWAY), 94–114 (SNPY…VGFI), 132–152 (WKYF…YSIG), 168–188 (IMPQ…VGTS), 199–219 (GLAI…AWAT), 236–256 (AGEL…FLWF), 263–283 (VFMG…IAVL), 288–308 (FLLV…ILQV), and 338–358 (VIVR…ATLK).

It belongs to the glycosyltransferase 4 family. MraY subfamily. Mg(2+) serves as cofactor.

It localises to the cell inner membrane. It catalyses the reaction UDP-N-acetyl-alpha-D-muramoyl-L-alanyl-gamma-D-glutamyl-meso-2,6-diaminopimeloyl-D-alanyl-D-alanine + di-trans,octa-cis-undecaprenyl phosphate = di-trans,octa-cis-undecaprenyl diphospho-N-acetyl-alpha-D-muramoyl-L-alanyl-D-glutamyl-meso-2,6-diaminopimeloyl-D-alanyl-D-alanine + UMP. It participates in cell wall biogenesis; peptidoglycan biosynthesis. Its function is as follows. Catalyzes the initial step of the lipid cycle reactions in the biosynthesis of the cell wall peptidoglycan: transfers peptidoglycan precursor phospho-MurNAc-pentapeptide from UDP-MurNAc-pentapeptide onto the lipid carrier undecaprenyl phosphate, yielding undecaprenyl-pyrophosphoryl-MurNAc-pentapeptide, known as lipid I. The polypeptide is Phospho-N-acetylmuramoyl-pentapeptide-transferase (Yersinia pseudotuberculosis serotype O:1b (strain IP 31758)).